A 1234-amino-acid polypeptide reads, in one-letter code: Transcription-repair-coupling factor (1234 aa).

Residues 663-824 (DMEKPIPMDR…LAGIREMSTI (162 aa)) form the Helicase ATP-binding domain. ATP is bound at residue 676–683 (GDVGYGKT). Residues 777-780 (DEEQ) carry the DEEQ box motif. The Helicase C-terminal domain maps to 842–999 (DDKQIAAALR…GMAVALKDLE (158 aa)). The interval 1207-1234 (RQHIGITNPSPPGEDGRGRNTTIKERQP) is disordered. The segment covering 1220 to 1234 (EDGRGRNTTIKERQP) has biased composition (basic and acidic residues).

This sequence in the N-terminal section; belongs to the UvrB family. The protein in the C-terminal section; belongs to the helicase family. RecG subfamily.

It is found in the cytoplasm. Couples transcription and DNA repair by recognizing RNA polymerase (RNAP) stalled at DNA lesions. Mediates ATP-dependent release of RNAP and its truncated transcript from the DNA, and recruitment of nucleotide excision repair machinery to the damaged site. The polypeptide is Transcription-repair-coupling factor (Mycobacterium bovis (strain ATCC BAA-935 / AF2122/97)).